The sequence spans 206 residues: Charged multivesicular body protein 2a homolog 1 (206 aa).

The interval 1–32 (MSFFGGNKKTPEQELKDSKRELSKGQREMDRE) is disordered. The span at 9-32 (KTPEQELKDSKRELSKGQREMDRE) shows a compositional bias: basic and acidic residues. Coiled coils occupy residues 12–80 (EQEL…RATK) and 114–148 (NKQT…DMFE).

Belongs to the SNF7 family. Probable core component of the endosomal sorting required for transport complex III (ESCRT-III). ESCRT-III components are thought to multimerize to form a flat lattice on the perimeter membrane of the endosome.

The protein resides in the endosome membrane. Probable core component of the endosomal sorting required for transport complex III (ESCRT-III) which is involved in multivesicular bodies (MVBs) formation and sorting of endosomal cargo proteins into MVBs. MVBs contain intraluminal vesicles (ILVs) that are generated by invagination and scission from the limiting membrane of the endosome and are delivered to lysosomes enabling degradation of membrane proteins. The sequence is that of Charged multivesicular body protein 2a homolog 1 (chmp2a1) from Dictyostelium discoideum (Social amoeba).